Consider the following 1802-residue polypeptide: Protein TIC 214 (1802 aa).

6 helical membrane-spanning segments follow: residues 19 to 39, 68 to 88, 91 to 111, 133 to 153, 176 to 196, and 227 to 247; these read IINSVVVVGLYYGFLTTFSIG, FIAGQLMMFISIYYAPLHLAL, PHTITVLALPYLLFHFFWNNH, VFLNNLIFQLFNHFILPSSML, VGWLIGHILFMKWVGLVLVWI, and IFSILLFITCVYYLGRIPSPI.

It belongs to the TIC214 family. As to quaternary structure, part of the Tic complex.

The protein resides in the plastid. Its subcellular location is the chloroplast inner membrane. In terms of biological role, involved in protein precursor import into chloroplasts. May be part of an intermediate translocation complex acting as a protein-conducting channel at the inner envelope. The sequence is that of Protein TIC 214 from Nasturtium officinale (Watercress).